The sequence spans 249 residues: MKYINQFMKISKGFLVPSSTIGLNSKTYHYKFPLLSFVREFSNGSYLRESAQNPANLGSQKGSDIFSMLANQKDDSNRQQKEERVKERPRSRISFKKQETMDPSYTLQSMVLRSSLKKVGALCRQIAHKPFYHALLQMKMSDKKISKYIATALVSARENAVREAGLDESTLYVDQIWVGKAKYLKKLITMGRGGRAIERSPRVRVTVVLRDERALLRDLQRRQQRLERKKVWTPLPNRPIYLKSNFFTC.

The N-terminal 22 residues, 1-22 (MKYINQFMKISKGFLVPSSTIG), are a transit peptide targeting the mitochondrion. The segment at 70–98 (ANQKDDSNRQQKEERVKERPRSRISFKKQ) is disordered. Residues 72–98 (QKDDSNRQQKEERVKERPRSRISFKKQ) are compositionally biased toward basic and acidic residues.

The protein belongs to the universal ribosomal protein uL22 family. In terms of assembly, component of the mitochondrial large ribosomal subunit (mt-LSU). Mature yeast 74S mitochondrial ribosomes consist of a small (37S) and a large (54S) subunit. The 37S small subunit contains a 15S ribosomal RNA (15S mt-rRNA) and at least 32 different proteins. The 54S large subunit contains a 21S rRNA (21S mt-rRNA) and at least 45 different proteins. uL22m forms the wall of the exit tunnel.

The protein resides in the mitochondrion. Its function is as follows. Component of the mitochondrial ribosome (mitoribosome), a dedicated translation machinery responsible for the synthesis of mitochondrial genome-encoded proteins, including at least some of the essential transmembrane subunits of the mitochondrial respiratory chain. The mitoribosomes are attached to the mitochondrial inner membrane and translation products are cotranslationally integrated into the membrane. This Schizosaccharomyces pombe (strain 972 / ATCC 24843) (Fission yeast) protein is Large ribosomal subunit protein uL22m (mrpl22).